The chain runs to 591 residues: Phosphoglucan phosphatase LSF1, chloroplastic (591 aa).

A chloroplast-targeting transit peptide spans 1 to 61 (MAFLQQISGL…RRRRVVLRVV (61 aa)). A Tyrosine-protein phosphatase domain is found at 291–453 (RYSKITEQIY…VDDGKHDGTP (163 aa)). Residue Cys390 is the Phosphocysteine intermediate of the active site. 390 to 396 (CTTGFDR) contacts substrate.

Its subcellular location is the plastid. The protein localises to the chloroplast. In terms of biological role, starch granule-associated phosphoglucan phosphatase involved in the control of starch accumulation. Participates in the regulation of the initial steps of starch degradation at the granule surface. May release a different set of phosphate groups from those removed by DSP4. This Arabidopsis thaliana (Mouse-ear cress) protein is Phosphoglucan phosphatase LSF1, chloroplastic (LSF1).